Consider the following 614-residue polypeptide: Dihydroxy-acid dehydratase (614 aa).

Position 81 (Asp81) interacts with Mg(2+). Residue Cys122 participates in [2Fe-2S] cluster binding. Positions 123 and 124 each coordinate Mg(2+). Lys124 is modified (N6-carboxylysine). Cys195 contacts [2Fe-2S] cluster. Glu491 is a Mg(2+) binding site. The active-site Proton acceptor is the Ser517.

It belongs to the IlvD/Edd family. As to quaternary structure, homodimer. The cofactor is [2Fe-2S] cluster. Mg(2+) is required as a cofactor.

The enzyme catalyses (2R)-2,3-dihydroxy-3-methylbutanoate = 3-methyl-2-oxobutanoate + H2O. The catalysed reaction is (2R,3R)-2,3-dihydroxy-3-methylpentanoate = (S)-3-methyl-2-oxopentanoate + H2O. The protein operates within amino-acid biosynthesis; L-isoleucine biosynthesis; L-isoleucine from 2-oxobutanoate: step 3/4. Its pathway is amino-acid biosynthesis; L-valine biosynthesis; L-valine from pyruvate: step 3/4. In terms of biological role, functions in the biosynthesis of branched-chain amino acids. Catalyzes the dehydration of (2R,3R)-2,3-dihydroxy-3-methylpentanoate (2,3-dihydroxy-3-methylvalerate) into 2-oxo-3-methylpentanoate (2-oxo-3-methylvalerate) and of (2R)-2,3-dihydroxy-3-methylbutanoate (2,3-dihydroxyisovalerate) into 2-oxo-3-methylbutanoate (2-oxoisovalerate), the penultimate precursor to L-isoleucine and L-valine, respectively. This Actinobacillus succinogenes (strain ATCC 55618 / DSM 22257 / CCUG 43843 / 130Z) protein is Dihydroxy-acid dehydratase.